The primary structure comprises 94 residues: Co-chaperonin GroES (94 aa).

This sequence belongs to the GroES chaperonin family. Heptamer of 7 subunits arranged in a ring. Interacts with the chaperonin GroEL.

The protein resides in the cytoplasm. Together with the chaperonin GroEL, plays an essential role in assisting protein folding. The GroEL-GroES system forms a nano-cage that allows encapsulation of the non-native substrate proteins and provides a physical environment optimized to promote and accelerate protein folding. GroES binds to the apical surface of the GroEL ring, thereby capping the opening of the GroEL channel. This Streptococcus mitis protein is Co-chaperonin GroES.